Consider the following 126-residue polypeptide: Small ribosomal subunit protein uS12 (126 aa).

The tract at residues 1–26 (MPTINQLVRKGRASETTKSKSPALQD) is disordered. Aspartate 89 carries the post-translational modification 3-methylthioaspartic acid. The tract at residues 103–126 (DTQGVKDRKQARSKYGAKRAKAGK) is disordered. Basic residues predominate over residues 113–126 (ARSKYGAKRAKAGK).

Belongs to the universal ribosomal protein uS12 family. As to quaternary structure, part of the 30S ribosomal subunit. Contacts proteins S8 and S17. May interact with IF1 in the 30S initiation complex.

Its function is as follows. With S4 and S5 plays an important role in translational accuracy. Functionally, interacts with and stabilizes bases of the 16S rRNA that are involved in tRNA selection in the A site and with the mRNA backbone. Located at the interface of the 30S and 50S subunits, it traverses the body of the 30S subunit contacting proteins on the other side and probably holding the rRNA structure together. The combined cluster of proteins S8, S12 and S17 appears to hold together the shoulder and platform of the 30S subunit. In Paraburkholderia xenovorans (strain LB400), this protein is Small ribosomal subunit protein uS12.